An 88-amino-acid chain; its full sequence is Small ribosomal subunit protein bS20 (88 aa).

Residues 1–21 are compositionally biased toward basic residues; that stretch reads MANSKSAKKRALQSEKRRQHN. The tract at residues 1–27 is disordered; the sequence is MANSKSAKKRALQSEKRRQHNASRSSM.

The protein belongs to the bacterial ribosomal protein bS20 family.

In terms of biological role, binds directly to 16S ribosomal RNA. The polypeptide is Small ribosomal subunit protein bS20 (Shewanella piezotolerans (strain WP3 / JCM 13877)).